The following is a 162-amino-acid chain: MKFQLWVSTGILLVSLLPCHECRAFIKSPASSPGALLPALSNSQPFLLRMGEEYFLRLGNLHKHSPGSFPEASAGNFVRAVQQLQAQQWSSQPGMRAASLDGADSPYSAQEDPTEKAKRAEEPPISLDLTFHLLREVLEMARAEQIAQQAHSNRKLMDIIGK.

A signal peptide spans Met-1–Ala-24. A propeptide spanning residues Phe-25–Arg-119 is cleaved from the precursor. Positions Ser-91–Glu-122 are disordered. The segment covering Pro-113–Glu-122 has biased composition (basic and acidic residues). Ile-160 carries the isoleucine amide modification.

Belongs to the sauvagine/corticotropin-releasing factor/urotensin I family.

The protein resides in the secreted. Its function is as follows. This hormone from hypothalamus regulates the release of corticotropin from pituitary gland. The sequence is that of Corticoliberin (crh) from Xenopus laevis (African clawed frog).